The primary structure comprises 165 residues: Cyclic pyranopterin monophosphate synthase (165 aa).

Substrate-binding positions include 76 to 78 (LCH) and 114 to 115 (ME). Asp-129 is an active-site residue.

It belongs to the MoaC family. In terms of assembly, homohexamer; trimer of dimers.

It catalyses the reaction (8S)-3',8-cyclo-7,8-dihydroguanosine 5'-triphosphate = cyclic pyranopterin phosphate + diphosphate. It functions in the pathway cofactor biosynthesis; molybdopterin biosynthesis. Functionally, catalyzes the conversion of (8S)-3',8-cyclo-7,8-dihydroguanosine 5'-triphosphate to cyclic pyranopterin monophosphate (cPMP). The polypeptide is Cyclic pyranopterin monophosphate synthase (Brucella canis (strain ATCC 23365 / NCTC 10854 / RM-666)).